Consider the following 362-residue polypeptide: Adenosine deaminase (362 aa).

Zn(2+) contacts are provided by His19 and His21. Substrate is bound by residues His21, Asp23, and Gly181. Zn(2+) is bound at residue His208. The active-site Proton donor is the Glu211. Asp300 provides a ligand contact to Zn(2+).

It belongs to the metallo-dependent hydrolases superfamily. Adenosine and AMP deaminases family. Adenosine deaminase subfamily. The cofactor is Zn(2+).

The enzyme catalyses adenosine + H2O + H(+) = inosine + NH4(+). It carries out the reaction 2'-deoxyadenosine + H2O + H(+) = 2'-deoxyinosine + NH4(+). In terms of biological role, catalyzes the hydrolytic deamination of adenosine and 2-deoxyadenosine. The polypeptide is Adenosine deaminase (Mycobacterium sp. (strain JLS)).